Here is a 71-residue protein sequence, read N- to C-terminus: Peptide Ctri10261 (71 aa).

A signal peptide spans 1-23; that stretch reads MKIPLILVTIAIILLMVPTESDA. Phe-37 carries the phenylalanine amide modification. Positions 41 to 71 are excised as a propeptide; that stretch reads SLKNRDYFDYMQDPSLSNADLRELEELLEDY.

The protein belongs to the non-disulfide-bridged peptide (NDBP) superfamily. Short antimicrobial peptide (group 4) family. As to expression, expressed by the venom gland.

Its subcellular location is the secreted. Functionally, antimicrobial peptide. In Chaerilus tricostatus (Scorpion), this protein is Peptide Ctri10261.